A 231-amino-acid chain; its full sequence is DNA mismatch repair protein MutH (231 aa).

The protein belongs to the MutH family.

The protein localises to the cytoplasm. Functionally, sequence-specific endonuclease that cleaves unmethylated GATC sequences. It is involved in DNA mismatch repair. This chain is DNA mismatch repair protein MutH, found in Klebsiella pneumoniae (strain 342).